Consider the following 124-residue polypeptide: Ragulator complex protein LAMTOR3 homolog (124 aa).

The protein belongs to the LAMTOR3 family. In terms of assembly, part of the Ragulator complex composed of Lamtor3, Lamtor2, CG14184, CG14812, and Lamtor4.

In terms of biological role, regulator of the TOR pathway, a signaling cascade that promotes cell growth in response to growth factors, energy levels, and amino acids. As part of the Ragulator complex, may activate the TOR signaling cascade in response to amino acids. This is Ragulator complex protein LAMTOR3 homolog from Drosophila melanogaster (Fruit fly).